A 593-amino-acid chain; its full sequence is tRNA (guanine(26)-N(2))-dimethyltransferase 1 (593 aa).

Residues 9–465 (TVIKEGEAEV…APMEIIWDIM (457 aa)) form the Trm1 methyltransferase domain. Arg-36 provides a ligand contact to S-adenosyl-L-methionine. The disordered stretch occupies residues 56-118 (AMLSKRARSS…KTAYESARRE (63 aa)). Basic and acidic residues-rich tracts occupy residues 68-81 (VVEK…KEET) and 88-118 (DNGK…ARRE). Residues Arg-134, Asp-152, and Val-185 each contribute to the S-adenosyl-L-methionine site. Residues Cys-315, Cys-318, Cys-350, and Cys-353 each contribute to the Zn(2+) site. Positions 546–593 (VNGHLNNNHKEAGDEEEEEEEEEPEEDIIEGEPELKRQKTTEDFASTS) are disordered. A compositionally biased stretch (acidic residues) spans 558-577 (GDEEEEEEEEEPEEDIIEGE). Positions 578–587 (PELKRQKTTE) are enriched in basic and acidic residues.

This sequence belongs to the class I-like SAM-binding methyltransferase superfamily. Trm1 family.

It carries out the reaction guanosine(26) in tRNA + 2 S-adenosyl-L-methionine = N(2)-dimethylguanosine(26) in tRNA + 2 S-adenosyl-L-homocysteine + 2 H(+). Its function is as follows. Dimethylates a single guanine residue at position 26 of most tRNAs using S-adenosyl-L-methionine as donor of the methyl groups. In Arabidopsis thaliana (Mouse-ear cress), this protein is tRNA (guanine(26)-N(2))-dimethyltransferase 1.